Here is a 312-residue protein sequence, read N- to C-terminus: Serpentine receptor class gamma-31 (312 aa).

Helical transmembrane passes span 6–26, 38–58, 92–112, 132–152, 180–200, 218–238, and 259–279; these read LITQFIYGTISTIIYSLTVVF, FLKLYICQFFFNMWMYWNFYI, FIFCQYHLGFMSYSNLFLTSI, TYILIALIFITPILFTYPLLV, FILVWMVVTVLLSIIANIICW, LFLVSFVTFVINCGVFSIAML, and LLSPFANDLLSLSTPYVLIIF.

The protein belongs to the nematode receptor-like protein srg family.

It is found in the membrane. This is Serpentine receptor class gamma-31 (srg-31) from Caenorhabditis elegans.